Consider the following 114-residue polypeptide: Large ribosomal subunit protein bL19 (114 aa).

It belongs to the bacterial ribosomal protein bL19 family.

This protein is located at the 30S-50S ribosomal subunit interface and may play a role in the structure and function of the aminoacyl-tRNA binding site. The protein is Large ribosomal subunit protein bL19 of Acetivibrio thermocellus (strain ATCC 27405 / DSM 1237 / JCM 9322 / NBRC 103400 / NCIMB 10682 / NRRL B-4536 / VPI 7372) (Clostridium thermocellum).